Reading from the N-terminus, the 488-residue chain is Malonate-semialdehyde dehydrogenase (488 aa).

NAD(+) contacts are provided by Ala150, Phe152, Lys176, Glu179, Arg180, Ser229, and Thr251. The active-site Nucleophile is Cys284. Position 382 (Glu382) interacts with NAD(+).

The protein belongs to the aldehyde dehydrogenase family. IolA subfamily. As to quaternary structure, homotetramer.

It carries out the reaction 3-oxopropanoate + NAD(+) + CoA + H2O = hydrogencarbonate + acetyl-CoA + NADH + H(+). The catalysed reaction is 2-methyl-3-oxopropanoate + NAD(+) + CoA + H2O = propanoyl-CoA + hydrogencarbonate + NADH + H(+). The protein operates within polyol metabolism; myo-inositol degradation into acetyl-CoA; acetyl-CoA from myo-inositol: step 7/7. Catalyzes the oxidation of malonate semialdehyde (MSA) and methylmalonate semialdehyde (MMSA) into acetyl-CoA and propanoyl-CoA, respectively. Is involved in a myo-inositol catabolic pathway. Bicarbonate, and not CO2, is the end-product of the enzymatic reaction. In Listeria innocua serovar 6a (strain ATCC BAA-680 / CLIP 11262), this protein is Malonate-semialdehyde dehydrogenase.